The primary structure comprises 248 residues: MSLVKRSVAEFIGTFWLVLGGCGAAVLAAAFPNLGIGFAGVSLAFGLTLLTMAFAIGHISGCHINPAVSIGLWAAKRFPATELLPYIAAQVLGGIAGAGVLYLIAGGKAGFSLSGGFASNGYGLHSPGGYTLLACLVCEVVMTFMFLMIILGSTDRRAPKGFAPIAIGLSLTLIHLISIPVTNTSVNPARSTGPALFVGDWAIAELWLFWLAPIVGAALAGLFYHAFLDEPGEETEGTPASAQLRTEA.

2 helical membrane-spanning segments follow: residues 11–31 (FIGT…AAAF) and 36–56 (IGFA…AFAI). Positions 65–67 (NPA) match the NPA 1 motif. Transmembrane regions (helical) follow at residues 87-107 (IAAQ…IAGG), 132-152 (LLAC…IILG), and 161-181 (GFAP…SIPV). Residues 187–189 (NPA) carry the NPA 2 motif. Residues 203–223 (IAELWLFWLAPIVGAALAGLF) form a helical membrane-spanning segment.

The protein belongs to the MIP/aquaporin (TC 1.A.8) family. In terms of assembly, homotetramer.

The protein resides in the cell inner membrane. It carries out the reaction H2O(in) = H2O(out). Its function is as follows. Channel that permits osmotically driven movement of water in both directions. It is involved in the osmoregulation and in the maintenance of cell turgor during volume expansion in rapidly growing cells. It mediates rapid entry or exit of water in response to abrupt changes in osmolarity. This is Aquaporin Z from Gloeobacter violaceus (strain ATCC 29082 / PCC 7421).